A 420-amino-acid chain; its full sequence is Phosphatidylinositol 5-phosphate 4-kinase type-2 gamma (420 aa).

At Ala-2 the chain carries N-acetylalanine. Position 26 is a phosphoserine (Ser-26). Residues 43–419 (AADPLVGVFL…RFLDFISNIF (377 aa)) form the PIPK domain. A required for interaction with PIP5K1A region spans residues 69 to 75 (VMLLPDD). Ser-349 is subject to Phosphoserine.

In terms of assembly, interacts with PIP5K1A; the interaction inhibits PIP5K1A kinase activity. In terms of processing, phosphorylated, phosphorylation is induced by EGF. As to expression, widely expressed, with the most abundant expression in kidney.

The protein localises to the endoplasmic reticulum. It localises to the cytoplasm. It carries out the reaction a 1,2-diacyl-sn-glycero-3-phospho-(1D-myo-inositol-5-phosphate) + ATP = a 1,2-diacyl-sn-glycero-3-phospho-(1D-myo-inositol-4,5-bisphosphate) + ADP + H(+). The enzyme catalyses 1,2-dihexadecanoyl-sn-glycero-3-phospho-(1D-myo-inositol-5-phosphate) + ATP = 1,2-dihexadecanoyl-sn-glycero-3-phospho-(1D-myo-inositol-4,5-bisphosphate) + ADP + H(+). The catalysed reaction is 1,2-dihexadecanoyl-sn-glycero-3-phospho-(1D-myo-inositol-5-phosphate) + GTP = 1,2-dihexadecanoyl-sn-glycero-3-phospho-(1D-myo-inositol-4,5-bisphosphate) + GDP + H(+). In terms of biological role, phosphatidylinositol 5-phosphate 4-kinase with low enzymatic activity. May be a GTP sensor, has higher GTP-dependent kinase activity than ATP-dependent kinase activity. PIP4Ks negatively regulate insulin signaling through a catalytic-independent mechanism. They interact with PIP5Ks and suppress PIP5K-mediated PtdIns(4,5)P2 synthesis and insulin-dependent conversion to PtdIns(3,4,5)P3. The protein is Phosphatidylinositol 5-phosphate 4-kinase type-2 gamma of Rattus norvegicus (Rat).